The following is a 745-amino-acid chain: Phosphoribosylformylglycinamidine synthase subunit PurL (745 aa).

His47 is a catalytic residue. Positions 50 and 90 each coordinate ATP. Glu92 is a Mg(2+) binding site. Residues 93-96 and Arg115 contribute to the substrate site; that span reads SHNH. Catalysis depends on His94, which acts as the Proton acceptor. Asp116 contributes to the Mg(2+) binding site. Gln240 is a binding site for substrate. Position 268 (Asp268) interacts with Mg(2+). Residue 312-314 coordinates substrate; it reads ESQ. ATP-binding residues include Asn501 and Gly538. Mg(2+) is bound at residue Asn539. Ser541 provides a ligand contact to substrate.

Belongs to the FGAMS family. As to quaternary structure, monomer. Part of the FGAM synthase complex composed of 1 PurL, 1 PurQ and 2 PurS subunits.

It is found in the cytoplasm. The enzyme catalyses N(2)-formyl-N(1)-(5-phospho-beta-D-ribosyl)glycinamide + L-glutamine + ATP + H2O = 2-formamido-N(1)-(5-O-phospho-beta-D-ribosyl)acetamidine + L-glutamate + ADP + phosphate + H(+). Its pathway is purine metabolism; IMP biosynthesis via de novo pathway; 5-amino-1-(5-phospho-D-ribosyl)imidazole from N(2)-formyl-N(1)-(5-phospho-D-ribosyl)glycinamide: step 1/2. In terms of biological role, part of the phosphoribosylformylglycinamidine synthase complex involved in the purines biosynthetic pathway. Catalyzes the ATP-dependent conversion of formylglycinamide ribonucleotide (FGAR) and glutamine to yield formylglycinamidine ribonucleotide (FGAM) and glutamate. The FGAM synthase complex is composed of three subunits. PurQ produces an ammonia molecule by converting glutamine to glutamate. PurL transfers the ammonia molecule to FGAR to form FGAM in an ATP-dependent manner. PurS interacts with PurQ and PurL and is thought to assist in the transfer of the ammonia molecule from PurQ to PurL. The sequence is that of Phosphoribosylformylglycinamidine synthase subunit PurL from Leptospira borgpetersenii serovar Hardjo-bovis (strain JB197).